We begin with the raw amino-acid sequence, 159 residues long: NADH-quinone oxidoreductase subunit B (159 aa).

[4Fe-4S] cluster is bound by residues cysteine 37, cysteine 38, cysteine 102, and cysteine 132.

Belongs to the complex I 20 kDa subunit family. In terms of assembly, NDH-1 is composed of 14 different subunits. Subunits NuoB, C, D, E, F, and G constitute the peripheral sector of the complex. Requires [4Fe-4S] cluster as cofactor.

The protein localises to the cell inner membrane. The enzyme catalyses a quinone + NADH + 5 H(+)(in) = a quinol + NAD(+) + 4 H(+)(out). NDH-1 shuttles electrons from NADH, via FMN and iron-sulfur (Fe-S) centers, to quinones in the respiratory chain. The immediate electron acceptor for the enzyme in this species is believed to be ubiquinone. Couples the redox reaction to proton translocation (for every two electrons transferred, four hydrogen ions are translocated across the cytoplasmic membrane), and thus conserves the redox energy in a proton gradient. The chain is NADH-quinone oxidoreductase subunit B from Variovorax paradoxus (strain S110).